A 214-amino-acid chain; its full sequence is Small ribosomal subunit protein uS3c (214 aa).

The KH type-2 domain occupies 39–111 (IRTYLNKLAK…QLTINIIEVE (73 aa)).

The protein belongs to the universal ribosomal protein uS3 family. As to quaternary structure, part of the 30S ribosomal subunit.

Its subcellular location is the plastid. It is found in the chloroplast. This chain is Small ribosomal subunit protein uS3c (rps3), found in Trieres chinensis (Marine centric diatom).